A 139-amino-acid chain; its full sequence is Small ribosomal subunit protein uS12 (139 aa).

Residue Asp-102 is modified to 3-methylthioaspartic acid.

Belongs to the universal ribosomal protein uS12 family. In terms of assembly, part of the 30S ribosomal subunit. Contacts proteins S8 and S17. May interact with IF1 in the 30S initiation complex.

In terms of biological role, with S4 and S5 plays an important role in translational accuracy. Functionally, interacts with and stabilizes bases of the 16S rRNA that are involved in tRNA selection in the A site and with the mRNA backbone. Located at the interface of the 30S and 50S subunits, it traverses the body of the 30S subunit contacting proteins on the other side and probably holding the rRNA structure together. The combined cluster of proteins S8, S12 and S17 appears to hold together the shoulder and platform of the 30S subunit. This Mycoplasma capricolum subsp. capricolum (strain California kid / ATCC 27343 / NCTC 10154) protein is Small ribosomal subunit protein uS12.